We begin with the raw amino-acid sequence, 201 residues long: uncharacterized protein (201 aa).

This is an uncharacterized protein from Haemophilus influenzae (strain ATCC 51907 / DSM 11121 / KW20 / Rd).